The following is a 383-amino-acid chain: Succinyl-diaminopimelate desuccinylase (383 aa).

H73 contributes to the Zn(2+) binding site. D75 is an active-site residue. A Zn(2+)-binding site is contributed by D107. The Proton acceptor role is filled by E141. Zn(2+) is bound by residues E142, E170, and H356.

It belongs to the peptidase M20A family. DapE subfamily. Homodimer. Zn(2+) is required as a cofactor. Co(2+) serves as cofactor.

The enzyme catalyses N-succinyl-(2S,6S)-2,6-diaminopimelate + H2O = (2S,6S)-2,6-diaminopimelate + succinate. It participates in amino-acid biosynthesis; L-lysine biosynthesis via DAP pathway; LL-2,6-diaminopimelate from (S)-tetrahydrodipicolinate (succinylase route): step 3/3. In terms of biological role, catalyzes the hydrolysis of N-succinyl-L,L-diaminopimelic acid (SDAP), forming succinate and LL-2,6-diaminopimelate (DAP), an intermediate involved in the bacterial biosynthesis of lysine and meso-diaminopimelic acid, an essential component of bacterial cell walls. The protein is Succinyl-diaminopimelate desuccinylase of Pseudomonas fluorescens (strain ATCC BAA-477 / NRRL B-23932 / Pf-5).